The following is a 349-amino-acid chain: UDP-3-O-acylglucosamine N-acyltransferase (349 aa).

Histidine 240 acts as the Proton acceptor in catalysis.

It belongs to the transferase hexapeptide repeat family. LpxD subfamily. As to quaternary structure, homotrimer.

It catalyses the reaction a UDP-3-O-[(3R)-3-hydroxyacyl]-alpha-D-glucosamine + a (3R)-hydroxyacyl-[ACP] = a UDP-2-N,3-O-bis[(3R)-3-hydroxyacyl]-alpha-D-glucosamine + holo-[ACP] + H(+). It participates in bacterial outer membrane biogenesis; LPS lipid A biosynthesis. In terms of biological role, catalyzes the N-acylation of UDP-3-O-acylglucosamine using 3-hydroxyacyl-ACP as the acyl donor. Is involved in the biosynthesis of lipid A, a phosphorylated glycolipid that anchors the lipopolysaccharide to the outer membrane of the cell. The polypeptide is UDP-3-O-acylglucosamine N-acyltransferase (Porphyromonas gingivalis (strain ATCC 33277 / DSM 20709 / CIP 103683 / JCM 12257 / NCTC 11834 / 2561)).